The sequence spans 406 residues: Odorant receptor 42a (406 aa).

The Cytoplasmic segment spans residues 1–44 (MDLRRWFPTLYTQSKDSPVRSRDATLYLLRCVFLMGVRKPPAKF). Residues 45-65 (FVAYVLWSFALNFCSTFYQPI) form a helical membrane-spanning segment. Residues 66 to 86 (GFLTGYISHLSEFSPGEFLTS) lie on the Extracellular side of the membrane. Residues 87 to 107 (LQVAFNAWSCSTKVLIVWALV) traverse the membrane as a helical segment. Residues 108–142 (KRFDEANNLLDEMDRRITDPGERLQIHRAVSLSNR) lie on the Cytoplasmic side of the membrane. A helical transmembrane segment spans residues 143-163 (IFFFFMAVYMVYATNTFLSAI). Residues 164–181 (FIGRPPYQNYYPFLDWRS) lie on the Extracellular side of the membrane. A helical membrane pass occupies residues 182–202 (STLHLALQAGLEYFAMAGACF). The Cytoplasmic portion of the chain corresponds to 203–271 (QDVCVDCYPV…DCLRPVISGT (69 aa)). The helical transmembrane segment at 272–292 (IFVQFLVVGLVLGFTLINIVL) threads the bilayer. Residues 293 to 298 (FANLGS) are Extracellular-facing. Residues 299-319 (AIAALSFMAAVLLETTPFCIL) traverse the membrane as a helical segment. The Cytoplasmic portion of the chain corresponds to 320–359 (CNYLTEDCYKLADALFQSNWIDEEKRYQKTLMYFLQKLQQ). The helical transmembrane segment at 360–380 (PITFMAMNVFPISVGTNISVT) threads the bilayer. The Extracellular portion of the chain corresponds to 381-406 (KFSFSVFTLVKQMNISEKLAKSEMEE). Residue N394 is glycosylated (N-linked (GlcNAc...) asparagine).

This sequence belongs to the insect chemoreceptor superfamily. Heteromeric odorant receptor channel (TC 1.A.69) family. Or2a subfamily. As to quaternary structure, interacts with Orco. Complexes exist early in the endomembrane system in olfactory sensory neurons (OSNs), coupling these complexes to the conserved ciliary trafficking pathway.

The protein resides in the cell membrane. Its function is as follows. Odorant receptor which mediates acceptance or avoidance behavior, depending on its substrates. The odorant receptor repertoire encodes a large collection of odor stimuli that vary widely in identity, intensity, and duration. May form a complex with Orco to form odorant-sensing units, providing sensitive and prolonged odorant signaling and calcium permeability. Involved in the behavioral responses to butanol, ethyl acetate, propyl acetate, and pentyl acetate. Also responds to pyrazines. In Drosophila melanogaster (Fruit fly), this protein is Odorant receptor 42a (Or42a).